The primary structure comprises 233 residues: Ribonuclease 3 (233 aa).

The RNase III domain maps to Lys7–Gly136. Residue Glu49 coordinates Mg(2+). Asp53 is an active-site residue. Mg(2+)-binding residues include Asp122 and Glu125. Glu125 is an active-site residue. The region spanning Asp162–Glu232 is the DRBM domain.

The protein belongs to the ribonuclease III family. In terms of assembly, homodimer. Requires Mg(2+) as cofactor.

It is found in the cytoplasm. It carries out the reaction Endonucleolytic cleavage to 5'-phosphomonoester.. Its function is as follows. Digests double-stranded RNA. Involved in the processing of primary rRNA transcript to yield the immediate precursors to the large and small rRNAs (23S and 16S). Processes some mRNAs, and tRNAs when they are encoded in the rRNA operon. Processes pre-crRNA and tracrRNA of type II CRISPR loci if present in the organism. This chain is Ribonuclease 3, found in Leuconostoc citreum (strain KM20).